Consider the following 292-residue polypeptide: MSERLSGHTLLVSLLATPIRHSLSPKMHNEAYAKLGLDYAYLAFEVGTEQLADAVQGIRALGIRGSNVSMPNKEAILPLLDDLSPAAELVGAVNTVVNKDGKGHLVGHITDGIGALRALADEGVSVKNKIITLAGVGGAGKAIAVQLAFDGAKEVRLFNRQATRLSSVQKLVTKLNQLTRTKVTLQDLEDQTAFKEAIRESHLFIDATSVGMKPLENLSLITDPELIRPDLVVFDIVYSPAETKLLAFARQHGAQKVINGLGMVLYQGAEAFKLIIGQDMPVDAIKPLLGDE.

Shikimate-binding positions include 22–24 and S69; that span reads SLS. Catalysis depends on K73, which acts as the Proton acceptor. Positions 94 and 111 each coordinate shikimate. Residues 135 to 139 and I236 contribute to the NADP(+) site; that span reads GVGGA. Y238 is a shikimate binding site. G260 serves as a coordination point for NADP(+).

It belongs to the shikimate dehydrogenase family. In terms of assembly, homodimer.

The catalysed reaction is shikimate + NADP(+) = 3-dehydroshikimate + NADPH + H(+). Its pathway is metabolic intermediate biosynthesis; chorismate biosynthesis; chorismate from D-erythrose 4-phosphate and phosphoenolpyruvate: step 4/7. Functionally, involved in the biosynthesis of the chorismate, which leads to the biosynthesis of aromatic amino acids. Catalyzes the reversible NADPH linked reduction of 3-dehydroshikimate (DHSA) to yield shikimate (SA). This is Shikimate dehydrogenase (NADP(+)) from Streptococcus pyogenes serotype M2 (strain MGAS10270).